Here is a 205-residue protein sequence, read N- to C-terminus: Small ribosomal subunit protein uS4 (205 aa).

Positions 94–172 (SRLDSIVYRM…TTPDYVSFDV (79 aa)) constitute an S4 RNA-binding domain.

The protein belongs to the universal ribosomal protein uS4 family. In terms of assembly, part of the 30S ribosomal subunit. Contacts protein S5. The interaction surface between S4 and S5 is involved in control of translational fidelity.

In terms of biological role, one of the primary rRNA binding proteins, it binds directly to 16S rRNA where it nucleates assembly of the body of the 30S subunit. Functionally, with S5 and S12 plays an important role in translational accuracy. In Rickettsia bellii (strain OSU 85-389), this protein is Small ribosomal subunit protein uS4.